A 258-amino-acid chain; its full sequence is Synaptosomal-associated protein 29 (258 aa).

A disordered region spans residues 1–41; the sequence is MSAYPKSYNPFDDDGEDEGARPAPWRDARDLPDGPDAPADR. Basic and acidic residues predominate over residues 18 to 32; the sequence is EGARPAPWRDARDLP. The stretch at 76 to 107 forms a coiled coil; that stretch reads ASSEELARQRGVLERTEKMVDKMDQDLKISQK. 3 positions are modified to phosphoserine: Ser-77, Ser-78, and Ser-114. The segment at 127–190 is disordered; that stretch reads PVETPPEQNG…GSAVSTDAYP (64 aa). Thr-130 and Thr-137 each carry phosphothreonine. Over residues 132–144 the composition is skewed to polar residues; the sequence is PEQNGTLASQPNS. Residues Ser-163, Ser-182, Ser-185, Ser-204, and Ser-210 each carry the phosphoserine modification. Positions 196–258 constitute a t-SNARE coiled-coil homology domain; it reads QAYHQKIDSN…KSTERKVRQL (63 aa).

Belongs to the SNAP-25 family. Forms a SNARE complex, composed of VAMP8, SNAP29 and STX17, involved in fusion of autophagosome with lysosome. Interacts with multiple syntaxins including STX6. Interacts with EIPR1. Interacts with STX17; this interaction is increased in the absence of TMEM39A.

The protein localises to the cytoplasm. It is found in the golgi apparatus membrane. Its subcellular location is the cytoplasmic vesicle. It localises to the autophagosome membrane. The protein resides in the cell projection. The protein localises to the cilium membrane. Its function is as follows. SNAREs, soluble N-ethylmaleimide-sensitive factor-attachment protein receptors, are essential proteins for fusion of cellular membranes. SNAREs localized on opposing membranes assemble to form a trans-SNARE complex, an extended, parallel four alpha-helical bundle that drives membrane fusion. SNAP29 is a SNARE involved in autophagy through the direct control of autophagosome membrane fusion with the lysososome membrane. Also plays a role in ciliogenesis by regulating membrane fusions. This is Synaptosomal-associated protein 29 from Pongo abelii (Sumatran orangutan).